The sequence spans 289 residues: ATP phosphoribosyltransferase (289 aa).

It belongs to the ATP phosphoribosyltransferase family. Long subfamily. Requires Mg(2+) as cofactor.

It localises to the cytoplasm. It carries out the reaction 1-(5-phospho-beta-D-ribosyl)-ATP + diphosphate = 5-phospho-alpha-D-ribose 1-diphosphate + ATP. It participates in amino-acid biosynthesis; L-histidine biosynthesis; L-histidine from 5-phospho-alpha-D-ribose 1-diphosphate: step 1/9. With respect to regulation, feedback inhibited by histidine. Its function is as follows. Catalyzes the condensation of ATP and 5-phosphoribose 1-diphosphate to form N'-(5'-phosphoribosyl)-ATP (PR-ATP). Has a crucial role in the pathway because the rate of histidine biosynthesis seems to be controlled primarily by regulation of HisG enzymatic activity. The sequence is that of ATP phosphoribosyltransferase from Solibacter usitatus (strain Ellin6076).